A 79-amino-acid chain; its full sequence is Acyl carrier protein (79 aa).

One can recognise a Carrier domain in the interval 2–77 (SEVAEKVKKI…DAIDYIEKKK (76 aa)). Position 37 is an O-(pantetheine 4'-phosphoryl)serine (Ser37).

This sequence belongs to the acyl carrier protein (ACP) family. 4'-phosphopantetheine is transferred from CoA to a specific serine of apo-ACP by AcpS. This modification is essential for activity because fatty acids are bound in thioester linkage to the sulfhydryl of the prosthetic group.

The protein localises to the cytoplasm. The protein operates within lipid metabolism; fatty acid biosynthesis. Its function is as follows. Carrier of the growing fatty acid chain in fatty acid biosynthesis. The chain is Acyl carrier protein from Acidiphilium cryptum (strain JF-5).